The following is a 75-amino-acid chain: Scuwaprin-a (75 aa).

An N-terminal signal peptide occupies residues 1-24; it reads MSSGGLLLLLGLLTLWAELTPVSG. Residues 27–72 enclose the WAP domain; that stretch reads RPKKPGLCPPRPQKPPCVKECKNDWSCPGQQKCCSYGCIDECRDPI. Disulfide bonds link Cys34-Cys60, Cys43-Cys64, Cys47-Cys59, and Cys53-Cys68.

This sequence belongs to the venom waprin family. As to expression, expressed by the venom gland.

The protein localises to the secreted. Its function is as follows. Damages membranes of susceptible bacteria. Has no hemolytic activity. Not toxic to mice. Does not inhibit the proteinases elastase and cathepsin G. The polypeptide is Scuwaprin-a (Oxyuranus scutellatus scutellatus (Australian taipan)).